Reading from the N-terminus, the 70-residue chain is Large ribosomal subunit protein uL29 (70 aa).

The protein belongs to the universal ribosomal protein uL29 family.

This Gloeobacter violaceus (strain ATCC 29082 / PCC 7421) protein is Large ribosomal subunit protein uL29.